The following is a 120-amino-acid chain: Large ribosomal subunit protein uL18 (120 aa).

Belongs to the universal ribosomal protein uL18 family. In terms of assembly, part of the 50S ribosomal subunit; part of the 5S rRNA/L5/L18/L25 subcomplex. Contacts the 5S and 23S rRNAs.

In terms of biological role, this is one of the proteins that bind and probably mediate the attachment of the 5S RNA into the large ribosomal subunit, where it forms part of the central protuberance. This Janthinobacterium sp. (strain Marseille) (Minibacterium massiliensis) protein is Large ribosomal subunit protein uL18.